The sequence spans 354 residues: MPALANLNIVPFISVENMMDLAVSTGIENFLVQLAGYIEEDFRRWESFDKIPRIASHSRDGVIELMPTSDGTLYGFKYVNGHPKNTKSGRQTVTAFGVLSDVDSGYPLLLSEMTILTALRTAATSAIAAKYLARKDSRTMALIGNGAQSEFQALAFKALIGVDRIRLYDIDPEATARCSRNLQRFGFQIEACTSAEQAVEGADIITTATADKHNATILSDNMIGPGVHINGVGGDCPGKTEMHRDILLRSDIFVEFPPQTRIEGEIQQLAPDHPVTELWRVMTGQDVGRKSDKQITLFDSVGFAIEDFSALRYVRDRVEGSSHSSPLDLLADPDEPRDLFGMLLRRQAFRRLGG.

L-ornithine is bound by residues arginine 53 and lysine 77. Residues threonine 92, arginine 120, 147 to 148 (AQ), aspartate 169, threonine 209, 232 to 235 (VGGD), lysine 239, and serine 300 contribute to the NAD(+) site. Arginine 120 provides a ligand contact to L-ornithine. Residue aspartate 235 participates in L-ornithine binding. Catalysis depends on aspartate 235, which acts as the Proton donor/acceptor. Valine 301 provides a ligand contact to L-ornithine.

This sequence belongs to the ornithine cyclodeaminase/mu-crystallin family. Requires NAD(+) as cofactor.

The enzyme catalyses L-ornithine = L-proline + NH4(+). It participates in amino-acid biosynthesis; L-proline biosynthesis; L-proline from L-ornithine: step 1/1. With respect to regulation, is subject to substrate inhibition. Is regulated by L-arginine, which stimulates enzymatic activity at 0.1-1 mM while inhibits activity at higher concentrations, and has pronounced effects on the optima for pH and temperature and on the Km for L-ornithine. Is not inhibited by L-proline. Its function is as follows. Catalyzes the conversion of L-ornithine into L-proline with release of ammonia. Is involved in the utilization of nopaline, a catabolic pathway that proceeds through L-arginine and L-ornithine to L-proline. Nopaline is a predominant opine in plant cells transformed with Ti plasmid pTiC58. This chain is Ornithine cyclodeaminase, found in Agrobacterium fabrum (strain C58 / ATCC 33970) (Agrobacterium tumefaciens (strain C58)).